A 363-amino-acid polypeptide reads, in one-letter code: Ribosomal RNA large subunit methyltransferase M (363 aa).

Residues Ser190, 223 to 226, Asp242, Asp262, and Asp280 each bind S-adenosyl-L-methionine; that span reads CPGG. Lys309 functions as the Proton acceptor in the catalytic mechanism.

This sequence belongs to the class I-like SAM-binding methyltransferase superfamily. RNA methyltransferase RlmE family. RlmM subfamily. As to quaternary structure, monomer.

It localises to the cytoplasm. The enzyme catalyses cytidine(2498) in 23S rRNA + S-adenosyl-L-methionine = 2'-O-methylcytidine(2498) in 23S rRNA + S-adenosyl-L-homocysteine + H(+). Catalyzes the 2'-O-methylation at nucleotide C2498 in 23S rRNA. The protein is Ribosomal RNA large subunit methyltransferase M of Actinobacillus pleuropneumoniae serotype 5b (strain L20).